Reading from the N-terminus, the 1172-residue chain is Lysylphosphatidylglycerol biosynthesis bifunctional protein LysX (1172 aa).

A disordered region spans residues 1-34; sequence MGLHLTVPGLRRDGRGVQSNSHDTSSKTTADISR. Residues 1-663 are phosphatidylglycerol lysyltransferase; it reads MGLHLTVPGL…LLHHDGSAPD (663 aa). Over residues 17-31 the composition is skewed to polar residues; the sequence is VQSNSHDTSSKTTAD. The next 7 helical transmembrane spans lie at 80-100, 122-142, 146-166, 177-197, 214-234, 272-292, and 612-632; these read VPAA…LASV, FPDT…ALTA, IAWL…AAEI, FGEN…VLGY, AVWL…VELF, AIFG…LFLS, and VIPR…LPFS. Positions 664–1172 are lysine--tRNA ligase; the sequence is VSGLRQVGLT…TLPFPLAKPH (509 aa). The OB DNA-binding region spans 726 to 804; the sequence is VSVSGRIMRI…SLIVSGWRLI (79 aa). 2 residues coordinate Mg(2+): aspartate 1084 and glutamate 1091.

The protein in the N-terminal section; belongs to the LPG synthetase family. It in the C-terminal section; belongs to the class-II aminoacyl-tRNA synthetase family. Mg(2+) serves as cofactor.

It is found in the cell membrane. It carries out the reaction tRNA(Lys) + L-lysine + ATP = L-lysyl-tRNA(Lys) + AMP + diphosphate. The enzyme catalyses L-lysyl-tRNA(Lys) + a 1,2-diacyl-sn-glycero-3-phospho-(1'-sn-glycerol) = a 1,2-diacyl-sn-glycero-3-phospho-1'-(3'-O-L-lysyl)-sn-glycerol + tRNA(Lys). In terms of biological role, catalyzes the production of L-lysyl-tRNA(Lys)transfer and the transfer of a lysyl group from L-lysyl-tRNA(Lys) to membrane-bound phosphatidylglycerol (PG), which produces lysylphosphatidylglycerol (LPG), one of the components of the bacterial membrane with a positive net charge. LPG synthesis contributes to the resistance to cationic antimicrobial peptides (CAMPs) and likely protects M.tuberculosis against the CAMPs produced by competiting microorganisms (bacteriocins). In fact, the modification of anionic phosphatidylglycerol with positively charged L-lysine results in repulsion of the peptides. The polypeptide is Lysylphosphatidylglycerol biosynthesis bifunctional protein LysX (lysX) (Mycobacterium tuberculosis (strain F11)).